The sequence spans 263 residues: Phosphatidylglycerol--prolipoprotein diacylglyceryl transferase (263 aa).

Helical transmembrane passes span 17-37 (LSVR…IFLG), 56-76 (LLFY…VLFY), and 88-108 (IFAV…VLVA). Position 139 (R139) interacts with a 1,2-diacyl-sn-glycero-3-phospho-(1'-sn-glycerol). A run of 2 helical transmembrane segments spans residues 176–196 (QLYH…WFTA) and 236–256 (ISMG…MVVF).

Belongs to the Lgt family.

It localises to the cell inner membrane. It carries out the reaction L-cysteinyl-[prolipoprotein] + a 1,2-diacyl-sn-glycero-3-phospho-(1'-sn-glycerol) = an S-1,2-diacyl-sn-glyceryl-L-cysteinyl-[prolipoprotein] + sn-glycerol 1-phosphate + H(+). It functions in the pathway protein modification; lipoprotein biosynthesis (diacylglyceryl transfer). Its function is as follows. Catalyzes the transfer of the diacylglyceryl group from phosphatidylglycerol to the sulfhydryl group of the N-terminal cysteine of a prolipoprotein, the first step in the formation of mature lipoproteins. The protein is Phosphatidylglycerol--prolipoprotein diacylglyceryl transferase of Dechloromonas aromatica (strain RCB).